Here is a 385-residue protein sequence, read N- to C-terminus: Putative nickel insertion protein (385 aa).

Belongs to the LarC family.

The chain is Putative nickel insertion protein from Citrifermentans bemidjiense (strain ATCC BAA-1014 / DSM 16622 / JCM 12645 / Bem) (Geobacter bemidjiensis).